We begin with the raw amino-acid sequence, 334 residues long: D-aspartate oxidase 1 (334 aa).

5 residues coordinate FAD: Asp-35, Arg-36, Ser-43, Gly-307, and Thr-312. The Microbody targeting signal motif lies at Ser-332 to Leu-334.

The protein belongs to the DAMOX/DASOX family. Requires FAD as cofactor. As to expression, expressed in the intestinal cells, hypodermis and in unidentified cells in the head in adult hermaphrodites.

It localises to the peroxisome matrix. It catalyses the reaction D-aspartate + O2 + H2O = oxaloacetate + H2O2 + NH4(+). It carries out the reaction D-glutamate + O2 + H2O = H2O2 + 2-oxoglutarate + NH4(+). With respect to regulation, not inhibited by potassium bromide or thiolactomycin. Its function is as follows. Selectively catalyzes the oxidative deamination of acidic amino acids. May play a role in the egg-laying events and early development of the worm, in addition to quality control of the germ cells. The chain is D-aspartate oxidase 1 (ddo-1) from Caenorhabditis elegans.